The chain runs to 389 residues: Spore coat polysaccharide biosynthesis protein SpsC (389 aa).

Residue Lys187 is modified to N6-(pyridoxal phosphate)lysine.

It belongs to the DegT/DnrJ/EryC1 family. Requires pyridoxal 5'-phosphate as cofactor.

It functions in the pathway spore coat biogenesis; spore coat polysaccharide biosynthesis. In Bacillus subtilis (strain 168), this protein is Spore coat polysaccharide biosynthesis protein SpsC (spsC).